Here is a 223-residue protein sequence, read N- to C-terminus: Deoxyribose-phosphate aldolase (223 aa).

Asp92 functions as the Proton donor/acceptor in the catalytic mechanism. Lys154 serves as the catalytic Schiff-base intermediate with acetaldehyde. Lys182 serves as the catalytic Proton donor/acceptor.

The protein belongs to the DeoC/FbaB aldolase family. DeoC type 1 subfamily.

The protein resides in the cytoplasm. It carries out the reaction 2-deoxy-D-ribose 5-phosphate = D-glyceraldehyde 3-phosphate + acetaldehyde. Its pathway is carbohydrate degradation; 2-deoxy-D-ribose 1-phosphate degradation; D-glyceraldehyde 3-phosphate and acetaldehyde from 2-deoxy-alpha-D-ribose 1-phosphate: step 2/2. Functionally, catalyzes a reversible aldol reaction between acetaldehyde and D-glyceraldehyde 3-phosphate to generate 2-deoxy-D-ribose 5-phosphate. The chain is Deoxyribose-phosphate aldolase from Haemophilus influenzae (strain PittEE).